The following is a 129-amino-acid chain: Glycine cleavage system H protein (129 aa).

A Lipoyl-binding domain is found at 24-106 (SYTVGITEHA…YGEGWFFRVM (83 aa)). Lys65 is modified (N6-lipoyllysine).

This sequence belongs to the GcvH family. As to quaternary structure, the glycine cleavage system is composed of four proteins: P, T, L and H. Requires (R)-lipoate as cofactor.

In terms of biological role, the glycine cleavage system catalyzes the degradation of glycine. The H protein shuttles the methylamine group of glycine from the P protein to the T protein. This Shewanella sp. (strain MR-7) protein is Glycine cleavage system H protein.